A 336-amino-acid chain; its full sequence is Apyrase (336 aa).

Residues 1-21 (MFLKFCVVAFAICLSINLSEG) form the signal peptide. An N-linked (GlcNAc...) asparagine glycan is attached at N209.

It belongs to the apyrase family. Requires Ca(2+) as cofactor. In terms of tissue distribution, salivary gland (at protein level).

It is found in the secreted. The enzyme catalyses a ribonucleoside 5'-triphosphate + 2 H2O = a ribonucleoside 5'-phosphate + 2 phosphate + 2 H(+). In terms of biological role, facilitates hematophagy by inhibiting ADP- and collagen-dependent platelet aggregation in the host. Cleaves adenosine triphosphate (ATP) and adenosine diphosphate (ADP) to adenosine monophosphate (AMP) and inorganic phosphate in calcium-dependent manner. This Phlebotomus duboscqi (Sandfly) protein is Apyrase.